A 446-amino-acid polypeptide reads, in one-letter code: N-succinylarginine dihydrolase (446 aa).

Residues S19 to S28, N110, and H137 to R138 contribute to the substrate site. Residue E174 is part of the active site. R214 is a binding site for substrate. H250 is a catalytic residue. Residues D252 and N363 each contribute to the substrate site. C369 serves as the catalytic Nucleophile.

The protein belongs to the succinylarginine dihydrolase family. As to quaternary structure, homodimer.

The enzyme catalyses N(2)-succinyl-L-arginine + 2 H2O + 2 H(+) = N(2)-succinyl-L-ornithine + 2 NH4(+) + CO2. Its pathway is amino-acid degradation; L-arginine degradation via AST pathway; L-glutamate and succinate from L-arginine: step 2/5. Its function is as follows. Catalyzes the hydrolysis of N(2)-succinylarginine into N(2)-succinylornithine, ammonia and CO(2). The protein is N-succinylarginine dihydrolase of Hahella chejuensis (strain KCTC 2396).